A 932-amino-acid chain; its full sequence is Protocadherin gamma-A12 (932 aa).

Residues 1–29 (MIPARLHRDYKGLVLLGILLGTLWETGCT) form the signal peptide. Cadherin domains follow at residues 30 to 133 (QIRY…APYF), 134 to 242 (RESE…APAF), 243 to 347 (AQPE…APEV), 348 to 452 (VLTS…PPVF), 453 to 562 (PQAS…APEI), and 570 to 683 (DGST…SPAN). Over 30–692 (QIRYSVPEEL…NSETSDLTLY (663 aa)) the chain is Extracellular. Residues Asn-265, Asn-419, and Asn-545 are each glycosylated (N-linked (GlcNAc...) asparagine). Residues 693 to 713 (LVVAVAAVSCVFLAFVILLLA) form a helical membrane-spanning segment. The Cytoplasmic portion of the chain corresponds to 714-932 (LRLRRWHKSR…KKKSGKKEKK (219 aa)). Disordered stretches follow at residues 803 to 841 (SHGLIEQAPPNTDWRFSQAQRPGTSGSQNGDDTGTWPNN) and 902 to 932 (ATLTNAAGKRDGKAPAGGNGNKKKSGKKEKK). Residues 816–841 (WRFSQAQRPGTSGSQNGDDTGTWPNN) show a composition bias toward polar residues. The segment covering 922 to 932 (NKKKSGKKEKK) has biased composition (basic residues).

It localises to the cell membrane. Potential calcium-dependent cell-adhesion protein. May be involved in the establishment and maintenance of specific neuronal connections in the brain. In Homo sapiens (Human), this protein is Protocadherin gamma-A12 (PCDHGA12).